The primary structure comprises 498 residues: Galactose-1-phosphate uridylyltransferase (498 aa).

The protein belongs to the galactose-1-phosphate uridylyltransferase type 2 family.

The protein resides in the cytoplasm. The enzyme catalyses alpha-D-galactose 1-phosphate + UDP-alpha-D-glucose = alpha-D-glucose 1-phosphate + UDP-alpha-D-galactose. It participates in carbohydrate metabolism; galactose metabolism. This is Galactose-1-phosphate uridylyltransferase from Staphylococcus carnosus (strain TM300).